The following is a 451-amino-acid chain: UDP-N-acetylmuramoylalanine--D-glutamate ligase (451 aa).

Position 118–124 (118–124 (GTKGKST)) interacts with ATP.

It belongs to the MurCDEF family.

Its subcellular location is the cytoplasm. The catalysed reaction is UDP-N-acetyl-alpha-D-muramoyl-L-alanine + D-glutamate + ATP = UDP-N-acetyl-alpha-D-muramoyl-L-alanyl-D-glutamate + ADP + phosphate + H(+). It functions in the pathway cell wall biogenesis; peptidoglycan biosynthesis. Cell wall formation. Catalyzes the addition of glutamate to the nucleotide precursor UDP-N-acetylmuramoyl-L-alanine (UMA). This is UDP-N-acetylmuramoylalanine--D-glutamate ligase (murD) from Borreliella burgdorferi (strain ATCC 35210 / DSM 4680 / CIP 102532 / B31) (Borrelia burgdorferi).